We begin with the raw amino-acid sequence, 478 residues long: Glucose-6-phosphate 1-dehydrogenase (478 aa).

NADP(+) is bound by residues arginine 48, 86 to 87 (DF), and lysine 142. Substrate-binding residues include histidine 172, lysine 176, glutamate 210, and aspartate 229. Histidine 234 functions as the Proton acceptor in the catalytic mechanism. Residues lysine 334 and lysine 339 each contribute to the substrate site.

The protein belongs to the glucose-6-phosphate dehydrogenase family.

It carries out the reaction D-glucose 6-phosphate + NADP(+) = 6-phospho-D-glucono-1,5-lactone + NADPH + H(+). The protein operates within carbohydrate degradation; pentose phosphate pathway; D-ribulose 5-phosphate from D-glucose 6-phosphate (oxidative stage): step 1/3. Its function is as follows. Catalyzes the oxidation of glucose 6-phosphate to 6-phosphogluconolactone. The sequence is that of Glucose-6-phosphate 1-dehydrogenase from Borreliella burgdorferi (strain ATCC 35210 / DSM 4680 / CIP 102532 / B31) (Borrelia burgdorferi).